Here is a 266-residue protein sequence, read N- to C-terminus: Tryptophan synthase alpha chain (266 aa).

Residues E49 and D60 each act as proton acceptor in the active site.

It belongs to the TrpA family. In terms of assembly, tetramer of two alpha and two beta chains.

The catalysed reaction is (1S,2R)-1-C-(indol-3-yl)glycerol 3-phosphate + L-serine = D-glyceraldehyde 3-phosphate + L-tryptophan + H2O. It participates in amino-acid biosynthesis; L-tryptophan biosynthesis; L-tryptophan from chorismate: step 5/5. Functionally, the alpha subunit is responsible for the aldol cleavage of indoleglycerol phosphate to indole and glyceraldehyde 3-phosphate. This Shewanella amazonensis (strain ATCC BAA-1098 / SB2B) protein is Tryptophan synthase alpha chain.